Here is a 74-residue protein sequence, read N- to C-terminus: Coleoptericin (74 aa).

Positions 1-74 (SLQGGAPNFP…TWHVGGTYRR (74 aa)) are disordered.

This sequence belongs to the coleoptericin family.

It is found in the secreted. Functionally, responsible for the anti Gram-negative activity of immune hemolymph of Z.atratus. The chain is Coleoptericin from Zophobas atratus (Giant mealworm beetle).